Consider the following 502-residue polypeptide: Lysine--tRNA ligase (502 aa).

Residues Glu-409 and Glu-416 each coordinate Mg(2+).

Belongs to the class-II aminoacyl-tRNA synthetase family. In terms of assembly, homodimer. The cofactor is Mg(2+).

It localises to the cytoplasm. It carries out the reaction tRNA(Lys) + L-lysine + ATP = L-lysyl-tRNA(Lys) + AMP + diphosphate. The polypeptide is Lysine--tRNA ligase (Prochlorococcus marinus (strain SARG / CCMP1375 / SS120)).